The chain runs to 402 residues: 1-deoxy-D-xylulose 5-phosphate reductoisomerase (402 aa).

NADPH is bound by residues threonine 13, glycine 14, serine 15, isoleucine 16, and asparagine 126. A 1-deoxy-D-xylulose 5-phosphate-binding site is contributed by lysine 127. Glutamate 128 is a binding site for NADPH. Aspartate 152 serves as a coordination point for Mn(2+). Residues serine 153, glutamate 154, serine 188, and histidine 211 each contribute to the 1-deoxy-D-xylulose 5-phosphate site. Glutamate 154 provides a ligand contact to Mn(2+). Glycine 217 is a binding site for NADPH. Positions 224, 229, 230, and 233 each coordinate 1-deoxy-D-xylulose 5-phosphate. A Mn(2+)-binding site is contributed by glutamate 233.

Belongs to the DXR family. Mg(2+) is required as a cofactor. It depends on Mn(2+) as a cofactor.

It carries out the reaction 2-C-methyl-D-erythritol 4-phosphate + NADP(+) = 1-deoxy-D-xylulose 5-phosphate + NADPH + H(+). It participates in isoprenoid biosynthesis; isopentenyl diphosphate biosynthesis via DXP pathway; isopentenyl diphosphate from 1-deoxy-D-xylulose 5-phosphate: step 1/6. Functionally, catalyzes the NADPH-dependent rearrangement and reduction of 1-deoxy-D-xylulose-5-phosphate (DXP) to 2-C-methyl-D-erythritol 4-phosphate (MEP). This is 1-deoxy-D-xylulose 5-phosphate reductoisomerase from Psychrobacter arcticus (strain DSM 17307 / VKM B-2377 / 273-4).